We begin with the raw amino-acid sequence, 115 residues long: MNETLLKCTTRHVRIFTARVENNDLVPDPNQLTLDLDPDNEFLWTESVTKEIQQRFAELVASHAGGELSDYNLRRIGSELEGTIRKLLQAGKLSYNPECRVLNYSMGLPRTPELL.

This sequence belongs to the complex I NdhM subunit family. NDH-1 can be composed of about 15 different subunits; different subcomplexes with different compositions have been identified which probably have different functions.

It is found in the cellular thylakoid membrane. It carries out the reaction a plastoquinone + NADH + (n+1) H(+)(in) = a plastoquinol + NAD(+) + n H(+)(out). The enzyme catalyses a plastoquinone + NADPH + (n+1) H(+)(in) = a plastoquinol + NADP(+) + n H(+)(out). Functionally, NDH-1 shuttles electrons from an unknown electron donor, via FMN and iron-sulfur (Fe-S) centers, to quinones in the respiratory and/or the photosynthetic chain. The immediate electron acceptor for the enzyme in this species is believed to be plastoquinone. Couples the redox reaction to proton translocation, and thus conserves the redox energy in a proton gradient. Cyanobacterial NDH-1 also plays a role in inorganic carbon-concentration. The sequence is that of NAD(P)H-quinone oxidoreductase subunit M from Prochlorococcus marinus (strain MIT 9313).